We begin with the raw amino-acid sequence, 86 residues long: Large ribosomal subunit protein bL27 (86 aa).

The tract at residues 1–20 (MAHKKAGGSSRNGRDSESKR) is disordered.

It belongs to the bacterial ribosomal protein bL27 family.

In Paraburkholderia phymatum (strain DSM 17167 / CIP 108236 / LMG 21445 / STM815) (Burkholderia phymatum), this protein is Large ribosomal subunit protein bL27.